The chain runs to 870 residues: MKFTLSWLKQFLDTSASVTEIAESLTAIGLEVEEIIDKAADLQKFEVAYIVSTKPHPSADKLKICEVETKNGNLQIVCGASNARAGIKVVLANIGVEIPNGKFKIKESNIRGEKSCGMLCSEEELFLASESEGIIELPEDAVVGEPFTKYYGLDDPVFVINVTPNRGDALSVYGIARDLSAKGIGTLKELEIPAVKSTFSSKVKLNIKDKEACPLFTFREIRNLKNKPSPDWLQKLLKNIGVKPISSIVDVTNYMSYSFGQPMHAYDADKIGGGIVVDRHCEENVIPRLDCGISGEESVIQDPVVKPRDDNRGFHALNDKKYLLNKSDLVIKDENGVQALAGIIGGISSSCDSNTMNILLEAACFNAKMVAASGRRLQIDTDSRYRFERNIDRNFTEKALNIATDLILSICDGGEVSEILISGEKEPAKKTLDFPAGYLEKITGIKLTILLHNEANKGEFVGNTEHSIAAYKEVREDASTGLTPKLPLEASYVKGLNIKGIEAILNKLGFATDTEKDVIKITPPSWRHDINILEDVVEEITRIYGYDKIESIKLPELEQDNNRLREHKRISSFKRILASKGYDEVVTNSFMNSKDAKLFTELKDELFLLNPISVEDNYMRPTIVPNLLDIVRKNLARSIKDMAFFEVGPNFIGLNTEATYLTAILTGSYNSKNPHSIGRSYDIFDLKSDLETVFDYAGLSIEKCIVSNQATPLYYHPTRSVNLALGKNLLGHFGQIHPKILKHYDIKEEVFAFELNITNLPAPKAKFGKRDEFIISDYQANFRDYAFIIARDQPVGEIISYINNFNKKLVKSVILFDIYSGDKLPSGKKSIAIRVGLQADDRTLNEDDLNSFSKDLIANIEQKFQGTLRE.

The 110-residue stretch at 39–148 (AADLQKFEVA…EDAVVGEPFT (110 aa)) folds into the tRNA-binding domain. The B5 domain occupies 427-551 (PAKKTLDFPA…RIYGYDKIES (125 aa)). Residues 450-498 (LLHNEANKGEFVGNTEHSIAAYKEVREDASTGLTPKLPLEASYVKGLNI) enclose the RPE1 insert domain. Mg(2+) is bound by residues Asp529, Asp535, Glu538, and Glu539. One can recognise an FDX-ACB domain in the interval 776–869 (SDYQANFRDY…IEQKFQGTLR (94 aa)).

Belongs to the phenylalanyl-tRNA synthetase beta subunit family. Type 1 subfamily. Tetramer of two alpha and two beta subunits. Mg(2+) serves as cofactor.

It localises to the cytoplasm. The enzyme catalyses tRNA(Phe) + L-phenylalanine + ATP = L-phenylalanyl-tRNA(Phe) + AMP + diphosphate + H(+). This Rickettsia bellii (strain RML369-C) protein is Phenylalanine--tRNA ligase beta subunit (pheT).